We begin with the raw amino-acid sequence, 810 residues long: MSRFFATNYNYDETSSSSEEDLLSSSEELLSSSEEGELSDDSLFNDESESESDFDSDDSDAKPYGPDWFKKPEFRKGGNKFLKGASYSDSDESDEEDGKKVVKSAREKLLDEMQAVYDKIETAEMSDDWMTILNEFDSITRLLVRAQQQNFGIPKIFVKVVAQVEDLVSNSEQTEIKNKAVSKAFNTTKQRVKKIARENEALLAKFREDPQSFDKEDTVEPELPPLNEENKVFTGKGVNLSSLASASSEFSFMASLQIVNDSRGKKNSNQAELIKTLEELLNIAKTPYERILAYLTLIPTRLEESTNLSYQPIDQWKSTHDDLNKLFDILDENISSYQVTELAARNDDLETEPEPNANGIREILGSLLSFTERLDDEFKKSLLNIDPHSSDYLERLRDEQNMYNLLLRTQLYMEATIPEERQEQLLARAFVRRLDHIYYKSNKLISIIENSAWKAVPSSYKSKYIPFSGNADEEYCSQLVEGLSKSLANQDNVFLQKRATLSHIYYTALNGEFEVAKELLLKTKVQSNINKSDPSLQILFNRVVVQLGLSAFKLCKIEECHQILNELLASSHLREILGQQSLQRIASNSSSSSSSEDREKQCLPYHQHINLDLVDLVFMTSSLLIEIPQMTAYLTGIKTKKVPVYQKSVRRLVESFDKSFFHGPPESIKEHVLYAAKSMQKGDWKGCLEYLKSVKTWNLLPNSVEVLDNLTERIQIETMKTYVFTYRRFYEKISIKKFSELFSLPEDKIVTTMEKVIADLELNIKLDDNKTYIVIEKGDEVSKLEEVAVKLNKEIRATRERLNPSHHNHR.

A compositionally biased stretch (polar residues) spans 1 to 11; the sequence is MSRFFATNYNY. Residues 1-98 are disordered; the sequence is MSRFFATNYN…DSDESDEEDG (98 aa). Low complexity predominate over residues 12–33; the sequence is DETSSSSEEDLLSSSEELLSSS. Residues 34–58 show a composition bias toward acidic residues; that stretch reads EEGELSDDSLFNDESESESDFDSDD. Residues 605–780 form the PCI domain; sequence YHQHINLDLV…TYIVIEKGDE (176 aa).

This sequence belongs to the eIF-3 subunit C family. As to quaternary structure, component of the eukaryotic translation initiation factor 3 (eIF-3) complex.

The protein resides in the cytoplasm. Component of the eukaryotic translation initiation factor 3 (eIF-3) complex, which is involved in protein synthesis of a specialized repertoire of mRNAs and, together with other initiation factors, stimulates binding of mRNA and methionyl-tRNAi to the 40S ribosome. The eIF-3 complex specifically targets and initiates translation of a subset of mRNAs involved in cell proliferation. The protein is Eukaryotic translation initiation factor 3 subunit C of Candida glabrata (strain ATCC 2001 / BCRC 20586 / JCM 3761 / NBRC 0622 / NRRL Y-65 / CBS 138) (Yeast).